Consider the following 480-residue polypeptide: Plant UBX domain-containing protein 10 (480 aa).

2 disordered regions span residues 47-78 and 335-383; these read DASS…PRGI and ADQA…AARV. A coiled-coil region spans residues 330–389; that stretch reads RAALEADQAREQQRQEEKERLEREAAEAERKLKEEEEARERAAREAEERQAARVRMRQEK. Residues 336–383 are compositionally biased toward basic and acidic residues; it reads DQAREQQRQEEKERLEREAAEAERKLKEEEEARERAAREAEERQAARV. The UBX domain maps to 399-477; sequence KGPDVTQVLV…GLHPQASLFI (79 aa).

The chain is Plant UBX domain-containing protein 10 from Arabidopsis thaliana (Mouse-ear cress).